The primary structure comprises 443 residues: Protoheme IX farnesyltransferase, mitochondrial (443 aa).

The next 7 membrane-spanning stretches (helical) occupy residues 174 to 194, 235 to 255, 257 to 277, 280 to 300, 309 to 329, 364 to 384, and 411 to 431; these read AAGF…LTSV, LAVS…TLGV, PLTG…YTPL, ISIA…VMGW, AGAF…FNAL, LLVL…FPIM, and LFFC…TCKR.

Belongs to the UbiA prenyltransferase family.

It localises to the mitochondrion membrane. It catalyses the reaction heme b + (2E,6E)-farnesyl diphosphate + H2O = Fe(II)-heme o + diphosphate. Functionally, converts protoheme IX and farnesyl diphosphate to heme O. The polypeptide is Protoheme IX farnesyltransferase, mitochondrial (COX10) (Pongo abelii (Sumatran orangutan)).